Consider the following 73-residue polypeptide: Protein SlyX homolog (73 aa).

Belongs to the SlyX family.

The protein is Protein SlyX homolog of Histophilus somni (strain 129Pt) (Haemophilus somnus).